A 430-amino-acid polypeptide reads, in one-letter code: Mannan endo-1,4-beta-mannosidase (430 aa).

The active-site Proton donor is Glu-173. Glu-269 (nucleophile) is an active-site residue. 2 CBM10 domains span residues 357–390 (SCGT…CVVA) and 395–424 (SCNW…CIAA).

Belongs to the glycosyl hydrolase 5 (cellulase A) family.

It carries out the reaction Random hydrolysis of (1-&gt;4)-beta-D-mannosidic linkages in mannans, galactomannans and glucomannans.. In terms of biological role, catalyzes the endo hydrolysis of beta-1,4-linked mannan, galactomannan and glucomannan. It is able to hydrolyze mannosidic linkages that are flanked by mannose or glucose. The chain is Mannan endo-1,4-beta-mannosidase from Cellvibrio japonicus (strain Ueda107) (Pseudomonas fluorescens subsp. cellulosa).